The chain runs to 640 residues: Calpain-5 (640 aa).

Residues L26–I343 form the Calpain catalytic domain. Catalysis depends on residues C81, H252, and N284. Residues N344–R496 form a domain III region. In terms of domain architecture, C2 spans R499–G617.

Belongs to the peptidase C2 family.

In terms of biological role, calcium-regulated non-lysosomal thiol-protease. This chain is Calpain-5 (Capn5), found in Rattus norvegicus (Rat).